The sequence spans 897 residues: Translation initiation factor IF-2 (897 aa).

Positions 52–310 are disordered; it reads EHGSAPDKLT…LLQQGFQKPA (259 aa). Residues 68–82 are compositionally biased toward polar residues; sequence STLNVPGTGGKSKSV. 2 stretches are compositionally biased toward basic and acidic residues: residues 85–159 and 166–217; these read EVRK…KDKV and EMTK…ENEK. Residues 256–272 show a composition bias toward basic residues; it reads GRTRTASKTARPQKKGN. Residues 273 to 286 show a composition bias toward basic and acidic residues; it reads KHAESKADREEARA. The region spanning 396-565 is the tr-type G domain; sequence PRAPVVTIMG…LLQAEVLELK (170 aa). A G1 region spans residues 405–412; that stretch reads GHVDHGKT. 405–412 is a binding site for GTP; sequence GHVDHGKT. The segment at 430 to 434 is G2; that stretch reads GITQH. The tract at residues 451-454 is G3; that stretch reads DTPG. GTP is bound by residues 451–455 and 505–508; these read DTPGH and NKID. The G4 stretch occupies residues 505 to 508; that stretch reads NKID. The G5 stretch occupies residues 541 to 543; the sequence is SAK.

This sequence belongs to the TRAFAC class translation factor GTPase superfamily. Classic translation factor GTPase family. IF-2 subfamily.

It is found in the cytoplasm. Its function is as follows. One of the essential components for the initiation of protein synthesis. Protects formylmethionyl-tRNA from spontaneous hydrolysis and promotes its binding to the 30S ribosomal subunits. Also involved in the hydrolysis of GTP during the formation of the 70S ribosomal complex. In Enterobacter cloacae, this protein is Translation initiation factor IF-2 (infB).